We begin with the raw amino-acid sequence, 164 residues long: UPF0304 protein Asuc_0543 (164 aa).

Belongs to the UPF0304 family.

This chain is UPF0304 protein Asuc_0543, found in Actinobacillus succinogenes (strain ATCC 55618 / DSM 22257 / CCUG 43843 / 130Z).